Here is a 328-residue protein sequence, read N- to C-terminus: Methionyl-tRNA formyltransferase (328 aa).

110-113 (SLLP) provides a ligand contact to (6S)-5,6,7,8-tetrahydrofolate.

This sequence belongs to the Fmt family.

It catalyses the reaction L-methionyl-tRNA(fMet) + (6R)-10-formyltetrahydrofolate = N-formyl-L-methionyl-tRNA(fMet) + (6S)-5,6,7,8-tetrahydrofolate + H(+). In terms of biological role, attaches a formyl group to the free amino group of methionyl-tRNA(fMet). The formyl group appears to play a dual role in the initiator identity of N-formylmethionyl-tRNA by promoting its recognition by IF2 and preventing the misappropriation of this tRNA by the elongation apparatus. This chain is Methionyl-tRNA formyltransferase, found in Prochlorococcus marinus (strain MIT 9312).